A 255-amino-acid polypeptide reads, in one-letter code: Snake venom serine protease HS112 (255 aa).

The first 18 residues, 1–18 (MVLIRVIANLLILQLSYA), serve as a signal peptide directing secretion. Positions 19 to 24 (QKSSEL) are excised as a propeptide. The region spanning 25–246 (VIGGDECDIN…YLPWIQSIIA (222 aa)) is the Peptidase S1 domain. 6 cysteine pairs are disulfide-bonded: cysteine 31/cysteine 162, cysteine 49/cysteine 65, cysteine 97/cysteine 253, cysteine 141/cysteine 207, cysteine 173/cysteine 186, and cysteine 197/cysteine 222. Catalysis depends on charge relay system residues histidine 64 and aspartate 109. Asparagine 169 carries an N-linked (GlcNAc...) asparagine glycan. Catalysis depends on serine 201, which acts as the Charge relay system. A glycan (N-linked (GlcNAc...) asparagine) is linked at asparagine 248.

Belongs to the peptidase S1 family. Snake venom subfamily. In terms of assembly, monomer. In terms of tissue distribution, expressed by the venom gland.

It localises to the secreted. Functionally, snake venom serine protease that may act in the hemostasis system of the prey. In Bothrops jararaca (Jararaca), this protein is Snake venom serine protease HS112.